The following is a 260-amino-acid chain: Putative protein phosphatase (260 aa).

The PPM-type phosphatase domain maps to 9-254 (FTGLSKKGPV…DNITAALVNL (246 aa)).

The enzyme catalyses O-phospho-L-seryl-[protein] + H2O = L-seryl-[protein] + phosphate. It catalyses the reaction O-phospho-L-threonyl-[protein] + H2O = L-threonyl-[protein] + phosphate. This chain is Putative protein phosphatase, found in Mycoplasma genitalium (strain ATCC 33530 / DSM 19775 / NCTC 10195 / G37) (Mycoplasmoides genitalium).